An 80-amino-acid polypeptide reads, in one-letter code: Small ribosomal subunit protein bS21 (80 aa).

This sequence belongs to the bacterial ribosomal protein bS21 family.

The protein is Small ribosomal subunit protein bS21 of Rhodospirillum rubrum (strain ATCC 11170 / ATH 1.1.1 / DSM 467 / LMG 4362 / NCIMB 8255 / S1).